The sequence spans 95 residues: Co-chaperonin GroES (95 aa).

Belongs to the GroES chaperonin family. As to quaternary structure, heptamer of 7 subunits arranged in a ring. Interacts with the chaperonin GroEL.

Its subcellular location is the cytoplasm. Its function is as follows. Together with the chaperonin GroEL, plays an essential role in assisting protein folding. The GroEL-GroES system forms a nano-cage that allows encapsulation of the non-native substrate proteins and provides a physical environment optimized to promote and accelerate protein folding. GroES binds to the apical surface of the GroEL ring, thereby capping the opening of the GroEL channel. This chain is Co-chaperonin GroES, found in Maricaulis maris (strain MCS10) (Caulobacter maris).